We begin with the raw amino-acid sequence, 545 residues long: Chaperonin GroEL 2 (545 aa).

Residues threonine 29 to proline 32, aspartate 86 to threonine 90, glycine 414, and aspartate 499 contribute to the ATP site.

The protein belongs to the chaperonin (HSP60) family. Forms a cylinder of 14 subunits composed of two heptameric rings stacked back-to-back. Interacts with the co-chaperonin GroES.

It is found in the cytoplasm. The catalysed reaction is ATP + H2O + a folded polypeptide = ADP + phosphate + an unfolded polypeptide.. Functionally, together with its co-chaperonin GroES, plays an essential role in assisting protein folding. The GroEL-GroES system forms a nano-cage that allows encapsulation of the non-native substrate proteins and provides a physical environment optimized to promote and accelerate protein folding. This is Chaperonin GroEL 2 from Chloroflexus aurantiacus (strain ATCC 29366 / DSM 635 / J-10-fl).